Here is a 785-residue protein sequence, read N- to C-terminus: Ubiquitin carboxyl-terminal hydrolase 1 (785 aa).

2 disordered regions span residues 1–21 (MPGV…SKKN) and 33–52 (TKRA…ASEY). Polar residues predominate over residues 7-16 (SESNGLSRGS). Residues Ser16, Ser42, and Ser67 each carry the phosphoserine modification. The 705-residue stretch at 81–785 (VGLNNLGNTC…TPYLLFYKKL (705 aa)) folds into the USP domain. The active-site Nucleophile is Cys90. 2 stretches are compositionally biased toward basic and acidic residues: residues 258-275 (EDFK…KSDT) and 286-298 (LSKE…ENQR). Residues 258–336 (EDFKEKLPKG…SPRPSQKKSR (79 aa)) form a disordered region. 2 positions are modified to phosphoserine: Ser313 and Ser475. The active-site Proton acceptor is His593. Residues 693 to 723 (TAFAENRNSETSDTTGTHESDRNKESSDQTG) are disordered. A compositionally biased stretch (basic and acidic residues) spans 708–719 (GTHESDRNKESS). Phosphoserine is present on Ser768.

Belongs to the peptidase C19 family. As to quaternary structure, interacts with FANCD2 and PCNA. Interacts with WDR48. Interacts with ATAD5; the interaction regulates USP1-mediated PCNA deubiquitination. In terms of processing, autocatalytic cleavage of USP1 following UV irradiation inactivates it, leading to an increase in ubiquitinated PCNA, recruitment of POLH and translesion synthesis. Ubiquitinated by the CRL2(KLHDC2) complex following autocatalytic cleavage, leading to its degradation: the CRL2(KLHDC2) complex recognizes the diglycine (Gly-Gly) at the C-terminus.

The protein resides in the nucleus. The enzyme catalyses Thiol-dependent hydrolysis of ester, thioester, amide, peptide and isopeptide bonds formed by the C-terminal Gly of ubiquitin (a 76-residue protein attached to proteins as an intracellular targeting signal).. Functionally, negative regulator of DNA damage repair which specifically deubiquitinates monoubiquitinated FANCD2. Also involved in PCNA-mediated translesion synthesis (TLS) by deubiquitinating monoubiquitinated PCNA. Has almost no deubiquitinating activity by itself and requires the interaction with WDR48 to have a high activity. The sequence is that of Ubiquitin carboxyl-terminal hydrolase 1 (USP1) from Homo sapiens (Human).